We begin with the raw amino-acid sequence, 209 residues long: Glutathione S-transferase D1 (209 aa).

The region spanning 1–81 is the GST N-terminal domain; it reads MVDFYYLPGS…YLVEKYGKTD (81 aa). Glutathione contacts are provided by residues S10, 51–53, and 65–67; these read HTI and ESR. The region spanning 87-208 is the GST C-terminal domain; the sequence is CPKKRAVINQ…AGCLEFKKYF (122 aa).

This sequence belongs to the GST superfamily. Delta family. In terms of assembly, homodimer.

The catalysed reaction is RX + glutathione = an S-substituted glutathione + a halide anion + H(+). It carries out the reaction 1,1,1-trichloro-2,2-bis(4-chlorophenyl)ethane = 1,1-dichloro-2,2-bis(4-chlorophenyl)ethylene + chloride + H(+). In terms of biological role, conjugation of reduced glutathione to a wide number of exogenous and endogenous hydrophobic electrophiles. Has DDT dehydrochlorinase activity. May be involved in detoxification. The chain is Glutathione S-transferase D1 from Drosophila melanogaster (Fruit fly).